A 349-amino-acid polypeptide reads, in one-letter code: Cytoplasmic tRNA 2-thiolation protein 2 (349 aa).

Belongs to the CTU2/NCS2 family.

The protein localises to the cytoplasm. It functions in the pathway tRNA modification; 5-methoxycarbonylmethyl-2-thiouridine-tRNA biosynthesis. Plays a central role in 2-thiolation of mcm(5)S(2)U at tRNA wobble positions of tRNA(Lys), tRNA(Glu) and tRNA(Gln). May act by forming a heterodimer with tut-1/ctu-1 that ligates sulfur from thiocarboxylated urm-1 onto the uridine of tRNAs at wobble position. The sequence is that of Cytoplasmic tRNA 2-thiolation protein 2 from Caenorhabditis elegans.